Consider the following 381-residue polypeptide: Chorismate synthase (381 aa).

2 residues coordinate NADP(+): Arg-41 and Arg-47. Residues 127–129, 247–248, Gly-291, 306–310, and Arg-332 contribute to the FMN site; these read RAS, QA, and KPIPT.

The protein belongs to the chorismate synthase family. Homotetramer. Requires FMNH2 as cofactor.

The catalysed reaction is 5-O-(1-carboxyvinyl)-3-phosphoshikimate = chorismate + phosphate. It functions in the pathway metabolic intermediate biosynthesis; chorismate biosynthesis; chorismate from D-erythrose 4-phosphate and phosphoenolpyruvate: step 7/7. Its function is as follows. Catalyzes the anti-1,4-elimination of the C-3 phosphate and the C-6 proR hydrogen from 5-enolpyruvylshikimate-3-phosphate (EPSP) to yield chorismate, which is the branch point compound that serves as the starting substrate for the three terminal pathways of aromatic amino acid biosynthesis. This reaction introduces a second double bond into the aromatic ring system. This chain is Chorismate synthase, found in Anaeromyxobacter sp. (strain K).